The sequence spans 717 residues: Ribosomal RNA large subunit methyltransferase K/L (717 aa).

A THUMP domain is found at 45-142; sequence GAYRICLGSR…DKRSGVQTVQ (98 aa).

The protein belongs to the methyltransferase superfamily. RlmKL family.

It localises to the cytoplasm. It catalyses the reaction guanosine(2445) in 23S rRNA + S-adenosyl-L-methionine = N(2)-methylguanosine(2445) in 23S rRNA + S-adenosyl-L-homocysteine + H(+). It carries out the reaction guanosine(2069) in 23S rRNA + S-adenosyl-L-methionine = N(2)-methylguanosine(2069) in 23S rRNA + S-adenosyl-L-homocysteine + H(+). Specifically methylates the guanine in position 2445 (m2G2445) and the guanine in position 2069 (m7G2069) of 23S rRNA. This chain is Ribosomal RNA large subunit methyltransferase K/L, found in Hahella chejuensis (strain KCTC 2396).